Here is a 429-residue protein sequence, read N- to C-terminus: Glutamate-1-semialdehyde 2,1-aminomutase 1 (429 aa).

Lysine 267 carries the N6-(pyridoxal phosphate)lysine modification.

Belongs to the class-III pyridoxal-phosphate-dependent aminotransferase family. HemL subfamily. In terms of assembly, homodimer. Requires pyridoxal 5'-phosphate as cofactor.

The protein localises to the cytoplasm. It carries out the reaction (S)-4-amino-5-oxopentanoate = 5-aminolevulinate. The protein operates within porphyrin-containing compound metabolism; protoporphyrin-IX biosynthesis; 5-aminolevulinate from L-glutamyl-tRNA(Glu): step 2/2. The protein is Glutamate-1-semialdehyde 2,1-aminomutase 1 of Staphylococcus carnosus (strain TM300).